We begin with the raw amino-acid sequence, 261 residues long: Acidic leucine-rich nuclear phosphoprotein 32 family member A (261 aa).

4 LRR repeats span residues 16 to 37, 39 to 60, 61 to 83, and 84 to 105; these read QITELNLDNCRSTSIVGLTDEY, ALESLSLINVGLTTLKGFPKLP, NLKKLELSDNRISSGLNYLTTSP, and KLQYLNLSGNKIKDLETLKPLE. The LRRCT domain occupies 118–156; sequence NDATQVDNYREKIFKMLPSLNFLDGFDCNDEEVQSDGDD. Composition is skewed to acidic residues over residues 145 to 185 and 194 to 229; these read CNDE…EEAN and YNDDLEEDNSDWEGEDEAGEEDEEEDSDIDDADGDA. The tract at residues 145 to 261 is disordered; that stretch reads CNDEEVQSDG…VRGKKRKHDG (117 aa). The span at 238–252 shows a compositional bias: basic and acidic residues; it reads AKDKDGEKEADESQV.

The protein belongs to the ANP32 family. Post-translationally, phosphorylated on serine residues.

The protein resides in the nucleus. It is found in the cytoplasm. Implicated in a number of cellular processes, including proliferation, differentiation, caspase-dependent and caspase-independent apoptosis, suppression of transformation (tumor suppressor), inhibition of protein phosphatase 2A, regulation of mRNA trafficking and stability, and inhibition of acetyltransferases as part of the INHAT (inhibitor of histone acetyltransferases) complex. This Drosophila melanogaster (Fruit fly) protein is Acidic leucine-rich nuclear phosphoprotein 32 family member A (Anp32a).